The following is a 339-amino-acid chain: tRNA pseudouridine synthase D (339 aa).

Residue D80 is the Nucleophile of the active site. Residues 155–311 (GFPNYFTEQR…AKGFSWAFEP (157 aa)) enclose the TRUD domain.

It belongs to the pseudouridine synthase TruD family.

It catalyses the reaction uridine(13) in tRNA = pseudouridine(13) in tRNA. Responsible for synthesis of pseudouridine from uracil-13 in transfer RNAs. This is tRNA pseudouridine synthase D from Haemophilus influenzae (strain 86-028NP).